Reading from the N-terminus, the 248-residue chain is MSVPHLRLGVNIDHVATVRNARGGEYPDPIRAAKIAEQAGADGITAHLREDRRHITDADIDGLMAALSVPLNFEMAATDEMQKIALRHKPHAVCIVPEKREERTTEGGLEVAREENRLAHFIAPLREVGCRVSIFIAADRRQVEAAHRIGAQVIELHTGAYCDAHAEGDFATRDRELEALREMSAFAHSLGLEVHAGHGLTYDTVQPVAAFPEVMELNIGHFLIGEAIFRGLHPAIAEMRRLMDEARA.

Residue Asn11 coordinates 3-amino-2-oxopropyl phosphate. Asp13 to His14 contacts 1-deoxy-D-xylulose 5-phosphate. Arg22 is a 3-amino-2-oxopropyl phosphate binding site. His47 acts as the Proton acceptor in catalysis. 1-deoxy-D-xylulose 5-phosphate-binding residues include Arg49 and His54. Glu74 serves as the catalytic Proton acceptor. Thr104 contributes to the 1-deoxy-D-xylulose 5-phosphate binding site. Residue His198 is the Proton donor of the active site. 3-amino-2-oxopropyl phosphate contacts are provided by residues Gly199 and Gly220–His221.

Belongs to the PNP synthase family. In terms of assembly, homooctamer; tetramer of dimers.

It localises to the cytoplasm. It carries out the reaction 3-amino-2-oxopropyl phosphate + 1-deoxy-D-xylulose 5-phosphate = pyridoxine 5'-phosphate + phosphate + 2 H2O + H(+). Its pathway is cofactor biosynthesis; pyridoxine 5'-phosphate biosynthesis; pyridoxine 5'-phosphate from D-erythrose 4-phosphate: step 5/5. Its function is as follows. Catalyzes the complicated ring closure reaction between the two acyclic compounds 1-deoxy-D-xylulose-5-phosphate (DXP) and 3-amino-2-oxopropyl phosphate (1-amino-acetone-3-phosphate or AAP) to form pyridoxine 5'-phosphate (PNP) and inorganic phosphate. The polypeptide is Pyridoxine 5'-phosphate synthase (Ruegeria pomeroyi (strain ATCC 700808 / DSM 15171 / DSS-3) (Silicibacter pomeroyi)).